Consider the following 141-residue polypeptide: HTH-type transcriptional repressor NsrR (141 aa).

In terms of domain architecture, HTH rrf2-type spans 2-129; sequence QLTSFTDYAL…DECTIESLLS (128 aa). Residues 28-51 constitute a DNA-binding region (H-T-H motif); the sequence is ITEVTDLFGVSRNHMVKVINRLGQ. Residues C91, C96, and C102 each contribute to the [2Fe-2S] cluster site.

The cofactor is [2Fe-2S] cluster.

Its function is as follows. Nitric oxide-sensitive repressor of genes involved in protecting the cell against nitrosative stress. May require iron for activity. The chain is HTH-type transcriptional repressor NsrR from Vibrio parahaemolyticus serotype O3:K6 (strain RIMD 2210633).